A 453-amino-acid polypeptide reads, in one-letter code: DDB1- and CUL4-associated factor 12 (453 aa).

The span at 1–12 (MARKAVSRKRKA) shows a compositional bias: basic residues. Residues 1 to 26 (MARKAVSRKRKAPASPGAGSDAQGQQ) are disordered. The interval 1–38 (MARKAVSRKRKAPASPGAGSDAQGQQFGWDHTLHKRKR) is required for nuclear location and interaction with MOV10. Ser15 carries the phosphoserine modification. 4 WD repeats span residues 138-178 (QQGC…PVCV), 182-220 (GHKDWIFSIAWISDTMAVSGSRDGSMGLWEVTDDVLTKS), 250-289 (PDNCKVRALAFNSKNKELGAVSLDGYFHLWKAENTLSKLL), and 338-375 (ERGSGIRSVSFYEHIITVGTGQGSLLFYDIRAQRFLEE).

This sequence belongs to the WD repeat DCAF12 family. As to quaternary structure, component of the DCX(DCAF12) E3 ubiquitin ligase complex, at least composed of CUL4 (CUL4A or CUL4B), DDB1, DCAF12 and RBX1.

Its subcellular location is the cytoplasm. The protein localises to the cytoskeleton. It is found in the microtubule organizing center. The protein resides in the centrosome. It localises to the nucleus. Its pathway is protein modification; protein ubiquitination. In terms of biological role, substrate-recognition component of a DCX (DDB1-CUL4-X-box) E3 ubiquitin-protein ligase complex of the DesCEND (destruction via C-end degrons) pathway, which recognizes a C-degron located at the extreme C terminus of target proteins, leading to their ubiquitination and degradation. The C-degron recognized by the DesCEND pathway is usually a motif of less than ten residues and can be present in full-length proteins, truncated proteins or proteolytically cleaved forms. The DCX(DCAF12) complex specifically recognizes proteins with a diglutamate (Glu-Glu) at the C-terminus, such as MAGEA3, MAGEA6 and CCT5, leading to their ubiquitination and degradation. Ubiquitination of MAGEA3, MAGEA6 by DCX(DCAF12) complex is required for starvation-induced autophagy. Also directly recognizes the C-terminal glutamate-leucine (Glu-Leu) degron as an alternative degron in proteins such as MOV10, leading to their ubiquitination and degradation. Controls the protein level of MOV10 during spermatogenesis and in T cells, especially after their activation. The sequence is that of DDB1- and CUL4-associated factor 12 (DCAF12) from Macaca fascicularis (Crab-eating macaque).